The following is a 158-amino-acid chain: Transcription elongation factor GreA (158 aa).

The protein belongs to the GreA/GreB family.

Necessary for efficient RNA polymerase transcription elongation past template-encoded arresting sites. The arresting sites in DNA have the property of trapping a certain fraction of elongating RNA polymerases that pass through, resulting in locked ternary complexes. Cleavage of the nascent transcript by cleavage factors such as GreA or GreB allows the resumption of elongation from the new 3'terminus. GreA releases sequences of 2 to 3 nucleotides. The chain is Transcription elongation factor GreA from Pelobacter propionicus (strain DSM 2379 / NBRC 103807 / OttBd1).